The following is a 428-amino-acid chain: Enolase 3 (428 aa).

Glutamine 163 is a binding site for (2R)-2-phosphoglycerate. Residue glutamate 205 is the Proton donor of the active site. Aspartate 242, glutamate 286, and aspartate 313 together coordinate Mg(2+). 4 residues coordinate (2R)-2-phosphoglycerate: lysine 338, arginine 367, serine 368, and lysine 389. The Proton acceptor role is filled by lysine 338.

Belongs to the enolase family. Mg(2+) serves as cofactor.

Its subcellular location is the cytoplasm. The protein localises to the secreted. The protein resides in the cell surface. It catalyses the reaction (2R)-2-phosphoglycerate = phosphoenolpyruvate + H2O. It participates in carbohydrate degradation; glycolysis; pyruvate from D-glyceraldehyde 3-phosphate: step 4/5. Functionally, catalyzes the reversible conversion of 2-phosphoglycerate (2-PG) into phosphoenolpyruvate (PEP). It is essential for the degradation of carbohydrates via glycolysis. The protein is Enolase 3 of Lactobacillus johnsonii (strain CNCM I-12250 / La1 / NCC 533).